We begin with the raw amino-acid sequence, 168 residues long: Small ribosomal subunit protein uS5 (168 aa).

The 64-residue stretch at 17 to 80 (IEDQLVAVNR…EDGKKKMINV (64 aa)) folds into the S5 DRBM domain.

Belongs to the universal ribosomal protein uS5 family. As to quaternary structure, part of the 30S ribosomal subunit. Contacts proteins S4 and S8.

In terms of biological role, with S4 and S12 plays an important role in translational accuracy. Located at the back of the 30S subunit body where it stabilizes the conformation of the head with respect to the body. This is Small ribosomal subunit protein uS5 from Lactobacillus acidophilus (strain ATCC 700396 / NCK56 / N2 / NCFM).